The chain runs to 132 residues: Small ribosomal subunit protein uS8 (132 aa).

Belongs to the universal ribosomal protein uS8 family. In terms of assembly, part of the 30S ribosomal subunit. Contacts proteins S5 and S12.

Its function is as follows. One of the primary rRNA binding proteins, it binds directly to 16S rRNA central domain where it helps coordinate assembly of the platform of the 30S subunit. This Nocardia farcinica (strain IFM 10152) protein is Small ribosomal subunit protein uS8.